Reading from the N-terminus, the 201-residue chain is Large ribosomal subunit protein uL4 (201 aa).

The disordered stretch occupies residues 43–69 (TKAQKGRSDVSGGGAKPWKQKGSGRAR).

The protein belongs to the universal ribosomal protein uL4 family. In terms of assembly, part of the 50S ribosomal subunit.

In terms of biological role, one of the primary rRNA binding proteins, this protein initially binds near the 5'-end of the 23S rRNA. It is important during the early stages of 50S assembly. It makes multiple contacts with different domains of the 23S rRNA in the assembled 50S subunit and ribosome. Functionally, forms part of the polypeptide exit tunnel. This chain is Large ribosomal subunit protein uL4, found in Thioalkalivibrio sulfidiphilus (strain HL-EbGR7).